Consider the following 427-residue polypeptide: Enolase (427 aa).

Residue Gln163 participates in (2R)-2-phosphoglycerate binding. Glu205 acts as the Proton donor in catalysis. Mg(2+) contacts are provided by Asp242, Glu285, and Asp312. Residues Lys337, Arg366, Ser367, and Lys388 each coordinate (2R)-2-phosphoglycerate. Lys337 acts as the Proton acceptor in catalysis.

It belongs to the enolase family. Requires Mg(2+) as cofactor.

The protein resides in the cytoplasm. It localises to the secreted. The protein localises to the cell surface. It catalyses the reaction (2R)-2-phosphoglycerate = phosphoenolpyruvate + H2O. Its pathway is carbohydrate degradation; glycolysis; pyruvate from D-glyceraldehyde 3-phosphate: step 4/5. In terms of biological role, catalyzes the reversible conversion of 2-phosphoglycerate (2-PG) into phosphoenolpyruvate (PEP). It is essential for the degradation of carbohydrates via glycolysis. The protein is Enolase of Leptothrix cholodnii (strain ATCC 51168 / LMG 8142 / SP-6) (Leptothrix discophora (strain SP-6)).